The sequence spans 710 residues: Denticleless protein homolog A (710 aa).

WD repeat units lie at residues 47-89 (GMPV…MQRL), 96-135 (AHTN…LIGE), and 138-178 (GHQC…KDGF). The DDB1-binding motif motif lies at 168 to 171 (WDTR). The short motif at 197-204 (PSKMKKRK) is the Nuclear localization signal element. WD repeat units follow at residues 215 to 254 (DSQQ…SAYR), 270 to 309 (TRKL…TDPV), 314 to 355 (GHQN…AAPV), and 359 to 398 (GHCQ…CEDS). A DDB1-binding motif motif is present at residues 244 to 247 (WDLR). Disordered regions lie at residues 428 to 534 (GKPS…VSSA) and 652 to 698 (ALGH…PGSM). A compositionally biased stretch (low complexity) spans 430-450 (PSVMSSSSLTSSPTPASCAPS). Polar residues-rich tracts occupy residues 504 to 516 (TPKS…TKTP) and 659 to 690 (SSPQ…SPVS).

The protein belongs to the WD repeat cdt2 family. Component of the DCX(DTL) E3 ubiquitin ligase complex, at least composed of cul4 (cul4a or cul4b), ddb1, dtl/cdt2 and rbx1.

It is found in the nucleus. The protein localises to the cytoplasm. It localises to the cytoskeleton. Its subcellular location is the microtubule organizing center. The protein resides in the centrosome. It is found in the chromosome. It functions in the pathway protein modification; protein ubiquitination. Substrate-specific adapter of a DCX (DDB1-CUL4-X-box) E3 ubiquitin-protein ligase complex required for cell cycle control, DNA damage response and translesion DNA synthesis. The DCX(DTL) complex, also named CRL4(CDT2) complex, mediates the polyubiquitination and subsequent degradation of CDT1, CDKN1A/p21(CIP1), KMT5A and SDE2. CDT1 degradation in response to DNA damage is necessary to ensure proper cell cycle regulation of DNA replication. CDKN1A/p21(CIP1) degradation during S phase or following UV irradiation is essential to control replication licensing. KMT5A degradation is also important for a proper regulation of mechanisms such as TGF-beta signaling, cell cycle progression, DNA repair and cell migration. Most substrates require their interaction with PCNA for their polyubiquitination: substrates interact with PCNA via their PIP-box, and those containing the 'K+4' motif in the PIP box, recruit the DCX(DTL) complex, leading to their degradation. In undamaged proliferating cells, the DCX(DTL) complex also promotes the 'Lys-164' monoubiquitination of PCNA, thereby being involved in PCNA-dependent translesion DNA synthesis. May play a role in the regulation of the circadian clock. This is Denticleless protein homolog A (dtl-a) from Xenopus laevis (African clawed frog).